Consider the following 420-residue polypeptide: Putative movement protein (420 aa).

Low complexity-rich tracts occupy residues methionine 1–serine 18 and threonine 30–proline 59. Disordered stretches follow at residues methionine 1 to proline 77, serine 137 to serine 181, arginine 195 to threonine 219, isoleucine 235 to proline 281, proline 327 to glutamine 370, and leucine 396 to proline 420. Residues lysine 60–proline 69 show a composition bias toward pro residues. The span at serine 137 to glycine 157 shows a compositional bias: polar residues. Positions serine 158–serine 181 are enriched in low complexity. Positions glycine 253–glycine 263 are enriched in polar residues. Over residues proline 327 to alanine 348 the composition is skewed to low complexity.

In terms of biological role, cell-to-cell movement. This Maize rayado fino virus (isolate Costa Rica/Guapiles) (MRFV) protein is Putative movement protein.